A 29-amino-acid chain; its full sequence is Potassium channel toxin alpha-KTx 8.4 (29 aa).

Cystine bridges form between cysteine 3–cysteine 19, cysteine 6–cysteine 24, and cysteine 10–cysteine 26.

This sequence belongs to the short scorpion toxin superfamily. Potassium channel inhibitor family. Alpha-KTx 08 subfamily. Expressed by the venom gland.

It localises to the secreted. Functionally, inhibits voltage-gated potassium channels. The chain is Potassium channel toxin alpha-KTx 8.4 from Leiurus hebraeus (Hebrew deathstalker scorpion).